We begin with the raw amino-acid sequence, 363 residues long: 3-isopropylmalate dehydrogenase (363 aa).

76–89 contacts NAD(+); sequence GPKWDTLPGHLRPE. Residues R96, R106, R134, and D223 each contribute to the substrate site. Residues D223, D247, and D251 each contribute to the Mg(2+) site. 281-293 is a binding site for NAD(+); the sequence is GSAPDIAGKGVAN.

It belongs to the isocitrate and isopropylmalate dehydrogenases family. LeuB type 1 subfamily. As to quaternary structure, homodimer. Mg(2+) is required as a cofactor. Mn(2+) serves as cofactor.

Its subcellular location is the cytoplasm. The catalysed reaction is (2R,3S)-3-isopropylmalate + NAD(+) = 4-methyl-2-oxopentanoate + CO2 + NADH. It participates in amino-acid biosynthesis; L-leucine biosynthesis; L-leucine from 3-methyl-2-oxobutanoate: step 3/4. In terms of biological role, catalyzes the oxidation of 3-carboxy-2-hydroxy-4-methylpentanoate (3-isopropylmalate) to 3-carboxy-4-methyl-2-oxopentanoate. The product decarboxylates to 4-methyl-2 oxopentanoate. The sequence is that of 3-isopropylmalate dehydrogenase from Halalkalibacterium halodurans (strain ATCC BAA-125 / DSM 18197 / FERM 7344 / JCM 9153 / C-125) (Bacillus halodurans).